Consider the following 437-residue polypeptide: Bifunctional protein GlmU (437 aa).

The pyrophosphorylase stretch occupies residues Met-1 to Arg-223. UDP-N-acetyl-alpha-D-glucosamine is bound by residues Leu-8 to Gly-11, Lys-22, Gln-70, Gly-75 to Thr-76, Tyr-96 to Asp-98, Gly-135, Glu-149, Asn-164, and Asn-221. Asp-98 is a binding site for Mg(2+). Asn-221 serves as a coordination point for Mg(2+). Residues Ala-224–Ala-244 are linker. Residues Gly-245–Arg-437 form an N-acetyltransferase region. 2 residues coordinate UDP-N-acetyl-alpha-D-glucosamine: Arg-310 and Lys-328. His-340 serves as the catalytic Proton acceptor. Residues Tyr-343 and Asn-354 each coordinate UDP-N-acetyl-alpha-D-glucosamine. Acetyl-CoA-binding positions include Ala-357, Asn-363–Tyr-364, Ser-382, Ala-400, and Arg-417.

This sequence in the N-terminal section; belongs to the N-acetylglucosamine-1-phosphate uridyltransferase family. It in the C-terminal section; belongs to the transferase hexapeptide repeat family. As to quaternary structure, homotrimer. Mg(2+) is required as a cofactor.

It localises to the cytoplasm. It carries out the reaction alpha-D-glucosamine 1-phosphate + acetyl-CoA = N-acetyl-alpha-D-glucosamine 1-phosphate + CoA + H(+). It catalyses the reaction N-acetyl-alpha-D-glucosamine 1-phosphate + UTP + H(+) = UDP-N-acetyl-alpha-D-glucosamine + diphosphate. Its pathway is nucleotide-sugar biosynthesis; UDP-N-acetyl-alpha-D-glucosamine biosynthesis; N-acetyl-alpha-D-glucosamine 1-phosphate from alpha-D-glucosamine 6-phosphate (route II): step 2/2. It participates in nucleotide-sugar biosynthesis; UDP-N-acetyl-alpha-D-glucosamine biosynthesis; UDP-N-acetyl-alpha-D-glucosamine from N-acetyl-alpha-D-glucosamine 1-phosphate: step 1/1. The protein operates within bacterial outer membrane biogenesis; LPS lipid A biosynthesis. In terms of biological role, catalyzes the last two sequential reactions in the de novo biosynthetic pathway for UDP-N-acetylglucosamine (UDP-GlcNAc). The C-terminal domain catalyzes the transfer of acetyl group from acetyl coenzyme A to glucosamine-1-phosphate (GlcN-1-P) to produce N-acetylglucosamine-1-phosphate (GlcNAc-1-P), which is converted into UDP-GlcNAc by the transfer of uridine 5-monophosphate (from uridine 5-triphosphate), a reaction catalyzed by the N-terminal domain. In Acidiphilium cryptum (strain JF-5), this protein is Bifunctional protein GlmU.